The primary structure comprises 254 residues: MHINHISVGNRLLPLSFQCAAGEKVYVAGPNGSGKSTLLSAIAGTLSSREGVKGEVLINETSLLTLPLAEQAIYRAYLCQQSRPAFNVDVFQMLALSLPAGRHVVEPEVQAAVRRVVELVQLQDKLHRSVQALSGGEWQRVRLAAVCLQVWRSLNPYSQLLILDEPAAPLDVAQAKWLYQLIDEMAAQGLVVIVANHDLNRVYQHADKVLLLNQGVLTAYGSADEVMSVENLQQVFETPVKKVAVDGQPYLIFT.

The ABC transporter domain occupies 1 to 239 (MHINHISVGN…ENLQQVFETP (239 aa)). ATP is bound at residue 29-36 (GPNGSGKS).

Belongs to the ABC transporter superfamily. Vitamin B12 importer (TC 3.A.1.13.1) family. The complex is composed of two ATP-binding proteins (BtuD), two transmembrane proteins (BtuC) and a solute-binding protein (BtuF).

It localises to the cell inner membrane. The enzyme catalyses an R-cob(III)alamin(out) + ATP + H2O = an R-cob(III)alamin(in) + ADP + phosphate + H(+). Part of the ABC transporter complex BtuCDF involved in vitamin B12 import. Responsible for energy coupling to the transport system. The chain is Vitamin B12 import ATP-binding protein BtuD from Vibrio vulnificus (strain YJ016).